The following is a 537-amino-acid chain: Protein ST7 homolog (537 aa).

Residues Phe-15–Trp-35 form a helical membrane-spanning segment. Residues Ser-61–Met-111 form a disordered region. The segment covering Ser-67 to Asn-84 has biased composition (low complexity). Residues Gly-85 to Gly-99 show a composition bias toward gly residues. The segment covering Ser-100 to Thr-109 has biased composition (low complexity). Residues Leu-472–Ala-492 form a helical membrane-spanning segment.

It belongs to the ST7 family.

It localises to the membrane. The protein is Protein ST7 homolog of Drosophila melanogaster (Fruit fly).